The following is a 256-amino-acid chain: Putative transposase for insertion sequence element IS112 (256 aa).

Belongs to the transposase 11 family.

Involved in the transposition of the insertion sequence IS112 which inactivates the SalI restriction-modification system. This is Putative transposase for insertion sequence element IS112 from Streptomyces albus G.